Here is a 307-residue protein sequence, read N- to C-terminus: Ornithine carbamoyltransferase (307 aa).

Carbamoyl phosphate-binding positions include 50–53, Gln77, Arg101, and 128–131; these read STRT and HPCQ. Residues Asn160, Asp224, and 228–229 contribute to the L-ornithine site; that span reads SM. Carbamoyl phosphate contacts are provided by residues 264–265 and Arg292; that span reads CL.

The protein belongs to the aspartate/ornithine carbamoyltransferase superfamily. OTCase family.

It is found in the cytoplasm. It carries out the reaction carbamoyl phosphate + L-ornithine = L-citrulline + phosphate + H(+). The protein operates within amino-acid biosynthesis; L-arginine biosynthesis; L-arginine from L-ornithine and carbamoyl phosphate: step 1/3. Its function is as follows. Reversibly catalyzes the transfer of the carbamoyl group from carbamoyl phosphate (CP) to the N(epsilon) atom of ornithine (ORN) to produce L-citrulline. The sequence is that of Ornithine carbamoyltransferase from Mycolicibacterium gilvum (strain PYR-GCK) (Mycobacterium gilvum (strain PYR-GCK)).